Consider the following 323-residue polypeptide: Methenyltetrahydromethanopterin cyclohydrolase (323 aa).

This sequence belongs to the MCH family.

It localises to the cytoplasm. The catalysed reaction is 5,10-methenyl-5,6,7,8-tetrahydromethanopterin + H2O = N(5)-formyl-5,6,7,8-tetrahydromethanopterin + H(+). It functions in the pathway one-carbon metabolism; methanogenesis from CO(2); 5,10-methenyl-5,6,7,8-tetrahydromethanopterin from CO(2): step 3/3. Catalyzes the reversible interconversion of 5-formyl-H(4)MPT to methenyl-H(4)MPT(+). The protein is Methenyltetrahydromethanopterin cyclohydrolase of Methanococcus maripaludis (strain DSM 14266 / JCM 13030 / NBRC 101832 / S2 / LL).